The primary structure comprises 90 residues: Large ribosomal subunit protein bL27 (90 aa).

Positions 1–21 are disordered; that stretch reads MAHKKAGGSSRNGRDSQAKRL.

It belongs to the bacterial ribosomal protein bL27 family.

The chain is Large ribosomal subunit protein bL27 from Laribacter hongkongensis (strain HLHK9).